Reading from the N-terminus, the 313-residue chain is N-acetyl-gamma-glutamyl-phosphate reductase 2 (313 aa).

The active site involves Cys117.

This sequence belongs to the NAGSA dehydrogenase family. Type 2 subfamily.

Its subcellular location is the cytoplasm. The enzyme catalyses N-acetyl-L-glutamate 5-semialdehyde + phosphate + NADP(+) = N-acetyl-L-glutamyl 5-phosphate + NADPH + H(+). The protein operates within amino-acid biosynthesis; L-arginine biosynthesis; N(2)-acetyl-L-ornithine from L-glutamate: step 3/4. Catalyzes the NADPH-dependent reduction of N-acetyl-5-glutamyl phosphate to yield N-acetyl-L-glutamate 5-semialdehyde. This is N-acetyl-gamma-glutamyl-phosphate reductase 2 from Pseudomonas putida (strain ATCC 47054 / DSM 6125 / CFBP 8728 / NCIMB 11950 / KT2440).